A 121-amino-acid polypeptide reads, in one-letter code: Estrogen receptor (121 aa).

The NR LBD domain maps to 1–121 (LFAPNLLLDR…IRHMSNKGME (121 aa)). C45 carries S-palmitoyl cysteine lipidation.

The protein belongs to the nuclear hormone receptor family. NR3 subfamily. In terms of assembly, binds DNA as a homodimer. Can form a heterodimer with ESR2. Interacts with coactivator NCOA5. Interacts with NCOA7; the interaction is ligand-inducible. Interacts with AKAP13, CUEDC2, HEXIM1, KDM5A, MAP1S, PELP1, SMARD1, and UBE1C. Interacts with MUC1; the interaction is stimulated by 7 beta-estradiol (E2) and enhances ERS1-mediated transcription. Interacts with DNTTIP2, and UIMC1. Interacts with KMT2D/MLL2. Interacts with ATAD2; the interaction is enhanced by estradiol. Interacts with KIF18A and LDB1. Interacts with RLIM (via its C-terminus). Interacts with MACROD1. Interacts with SH2D4A and PLCG. Interacts with SH2D4A; the interaction blocks binding to PLCG and inhibits estrogen-induced cell proliferation. Interacts with DYNLL1. Interacts with CCDC62; the interaction requires estradiol and appears to enhance the transcription of target genes. Interacts with NR2C1; the interaction prevents homodimerization of ESR1 and suppresses its transcriptional activity and cell growth. Interacts with DNAAF4. Interacts with PRMT2. Interacts with PI3KR1 or PIK3R2, SRC and PTK2/FAK1. Interacts with RBFOX2. Interacts with EP300; the interaction is estrogen-dependent and enhanced by CITED1. Interacts with CITED1; the interaction is estrogen-dependent. Interacts with FAM120B, FOXL2, PHB2 and SLC30A9. Interacts with coactivators NCOA3 and NCOA6. Interacts with STK3/MST2 only in the presence of SAV1 and vice-versa. Binds to CSNK1D. Interacts with NCOA2; NCOA2 can interact with ESR1 AF-1 and AF-2 domains simultaneously and mediate their transcriptional synergy. Interacts with DDX5. Interacts with NCOA1; the interaction seems to require a self-association of N-terminal and C-terminal regions. Interacts with ZNF366, DDX17, NFKB1, RELA, SP1 and SP3. Interacts with NRIP1. Interacts with GPER1; the interaction occurs in an estrogen-dependent manner. Interacts with CLOCK and the interaction is stimulated by estrogen. Interacts with TRIP4 (ufmylated); estrogen dependent. Interacts with LMTK3; the interaction phosphorylates ESR1 (in vitro) and protects it against proteasomal degradation. Interacts with CCAR2 (via N-terminus) in a ligand-independent manner. Interacts with ZFHX3. Interacts with SFR1 in a ligand-dependent and -independent manner. Interacts with DCAF13, LATS1 and DCAF1; regulates ESR1 ubiquitination and ubiquitin-mediated proteasomal degradation. Interacts (via DNA-binding domain) with POU4F2 (C-terminus); this interaction increases the estrogen receptor ESR1 transcriptional activity in a DNA- and ligand 17-beta-estradiol-independent manner. Interacts with ESRRB isoform 1. Interacts with UBE3A and WBP2. Interacts with GTF2B. Interacts with RBM39. In the absence of hormonal ligand, interacts with TACC1. Interacts with BAG1; the interaction is promoted in the absence of estradiol (17-beta-estradiol/E2). Interacts with and ubiquitinated by STUB1; the interaction is promoted in the absence of estradiol (17-beta-estradiol/E2). Interacts with NEDD8. In terms of processing, ubiquitinated; regulated by LATS1 via DCAF1 it leads to ESR1 proteasomal degradation. Deubiquitinated by OTUB1. Ubiquitinated by STUB1/CHIP; in the CA1 hippocampal region following loss of endogenous circulating estradiol (17-beta-estradiol/E2). Ubiquitinated by UBR5, leading to its degradation: UBR5 specifically recognizes and binds ligand-bound ESR1 when it is not associated with coactivators (NCOAs). In presence of NCOAs, the UBR5-degron is not accessible, preventing its ubiquitination and degradation. Post-translationally, palmitoylated at Cys-45 by ZDHHC7 and ZDHHC21. Palmitoylation is required for plasma membrane targeting and for rapid intracellular signaling via ERK and AKT kinases and cAMP generation, but not for signaling mediated by the nuclear hormone receptor. Phosphorylated by cyclin A/CDK2 and CK1. Phosphorylation probably enhances transcriptional activity. Dephosphorylation by PPP5C inhibits its transactivation activity. Phosphorylated by LMTK3 (in vitro). In terms of processing, dimethylated by PRMT1. Demethylated by JMJD6.

The protein resides in the nucleus. Its subcellular location is the cytoplasm. The protein localises to the golgi apparatus. It localises to the cell membrane. Its function is as follows. Nuclear hormone receptor. The steroid hormones and their receptors are involved in the regulation of eukaryotic gene expression and affect cellular proliferation and differentiation in target tissues. Ligand-dependent nuclear transactivation involves either direct homodimer binding to a palindromic estrogen response element (ERE) sequence or association with other DNA-binding transcription factors, such as AP-1/c-Jun, c-Fos, ATF-2, Sp1 and Sp3, to mediate ERE-independent signaling. Ligand binding induces a conformational change allowing subsequent or combinatorial association with multiprotein coactivator complexes through LXXLL motifs of their respective components. Mutual transrepression occurs between the estrogen receptor (ER) and NF-kappa-B in a cell-type specific manner. Decreases NF-kappa-B DNA-binding activity and inhibits NF-kappa-B-mediated transcription from the IL6 promoter and displace RELA/p65 and associated coregulators from the promoter. Recruited to the NF-kappa-B response element of the CCL2 and IL8 promoters and can displace CREBBP. Present with NF-kappa-B components RELA/p65 and NFKB1/p50 on ERE sequences. Can also act synergistically with NF-kappa-B to activate transcription involving respective recruitment adjacent response elements; the function involves CREBBP. Can activate the transcriptional activity of TFF1. Also mediates membrane-initiated estrogen signaling involving various kinase cascades. Essential for MTA1-mediated transcriptional regulation of BRCA1 and BCAS3. Maintains neuronal survival in response to ischemic reperfusion injury when in the presence of circulating estradiol (17-beta-estradiol/E2). In Macaca mulatta (Rhesus macaque), this protein is Estrogen receptor (ESR1).